The following is a 648-amino-acid chain: Sodium/nucleoside cotransporter 1 (648 aa).

At 1–80 (MADNTQRQRE…ARSFCREHRQ (80 aa)) the chain is on the cytoplasmic side. The helical transmembrane segment at 81–104 (LFGWICKGLLSTACLGFLMVACLL) threads the bilayer. At 105–109 (DLQRA) the chain is on the extracellular side. A helical membrane pass occupies residues 110–128 (LALLIITCVVLVFLAYDLL). Residues 129-147 (KRLLGSKLRRCVKFQGHSC) are Cytoplasmic-facing. The chain crosses the membrane as a helical span at residues 148–167 (LSLWLKRGLALAAGVGLILW). Topologically, residues 168-178 (LSLDTAQRPEQ) are extracellular. Residues 179–195 (LVSFAGICVFLVLLFAG) traverse the membrane as a helical segment. Residues 196 to 201 (SKHHRA) are Cytoplasmic-facing. A helical membrane pass occupies residues 202–222 (VSWRAVSWGLGLQFVLGLFVI). Residues 223-261 (RTEPGFIAFQWLGDQIQVFLSYTEAGSSFVFGEALVKDV) are Extracellular-facing. A helical membrane pass occupies residues 262 to 283 (FAFQVLPIIIFFSCVMSVLYYL). Residues 284 to 294 (GLMQWVILKIA) lie on the Cytoplasmic side of the membrane. Residues 295 to 318 (WLMQVTMGTSATETLSVAGNIFVS) form a helical membrane-spanning segment. Residues 319–337 (QTEAPLLIRPYLADMTLSE) are Extracellular-facing. A helical membrane pass occupies residues 338–360 (VHVVMTGGYATIAGSLLGAYISF). The Cytoplasmic portion of the chain corresponds to 361-366 (GIDAAS). A helical transmembrane segment spans residues 367-386 (LIAASVMAAPCALALSKLVY). Residues 387-423 (PEVEESKFRSENGVKLTYGDAQNLLEAASAGAAISVK) lie on the Extracellular side of the membrane. A helical membrane pass occupies residues 424–446 (VVANIAANLIAFLAVLAFVNAAL). Residues 447–457 (SWLGDMVDIQG) lie on the Cytoplasmic side of the membrane. The helical transmembrane segment at 458–479 (LSFQLICSYVLRPVAFLMGVAW) threads the bilayer. Over 480-534 (EDCPVVAELLGIKFFLNEFVAYQELSQYKQRRLAGAEEWLGDKKQWISVRAEILT) the chain is Extracellular. The helical transmembrane segment at 535 to 558 (TYALCGFANFSSIGIMLGGLTSLV) threads the bilayer. Residues 559 to 569 (PQRRSDFSQIV) lie on the Cytoplasmic side of the membrane. A helical transmembrane segment spans residues 570–592 (LRALITGAFVSLLNACVAGILYV). Topologically, residues 593–648 (PRGVEVDCVSLLNQTVSSSSFEVYLCCRQVFQSTSSEFSQVALDNCCRFYNHTVCT) are extracellular. Residues Asn-605 and Asn-643 are each glycosylated (N-linked (GlcNAc...) asparagine).

Belongs to the concentrative nucleoside transporter (CNT) (TC 2.A.41) family. Post-translationally, N-glycosylated. N-glycosylation is required for localization to the plasma membrane and the transporter activity. As to expression, expressed predominantly in the brush-border membranes of the polarized epithelial cells of jejunum and renal cortical tubules and in the bile canalicular membranes of liver parenchymal cells.

The protein resides in the cell membrane. The protein localises to the apical cell membrane. It carries out the reaction uridine(out) + Na(+)(out) = uridine(in) + Na(+)(in). The enzyme catalyses thymidine(out) + Na(+)(out) = thymidine(in) + Na(+)(in). The catalysed reaction is cytidine(out) + Na(+)(out) = cytidine(in) + Na(+)(in). It catalyses the reaction adenosine(out) + Na(+)(out) = adenosine(in) + Na(+)(in). Its activity is regulated as follows. Due to its high apparent affinity but slow transport, adenosine could act as a negative regulator of pyrimidine transport under some conditions. In terms of biological role, sodium and pyrimidine nucleoside symporter of the plasma membrane that imports uridine, thymidine and cytidine into cells by coupling their transport to the transmembrane sodium electrochemical gradient. Also transports adenosine, an atypical substrate transported with high apparent affinity, but low maximum velocity. Therefore, exhibits the transport characteristics of the nucleoside transport system cit or N2 subtype (N2/cit). Involved in renal nucleoside (re)absorption. In Rattus norvegicus (Rat), this protein is Sodium/nucleoside cotransporter 1.